A 543-amino-acid polypeptide reads, in one-letter code: Cobyric acid synthase (543 aa).

Positions 260–483 (MLDIVLVDLP…LHGVFDADGF (224 aa)) constitute a GATase cobBQ-type domain. The active-site Nucleophile is cysteine 346. Histidine 475 is a catalytic residue.

This sequence belongs to the CobB/CobQ family. CobQ subfamily.

Its pathway is cofactor biosynthesis; adenosylcobalamin biosynthesis. Catalyzes amidations at positions B, D, E, and G on adenosylcobyrinic A,C-diamide. NH(2) groups are provided by glutamine, and one molecule of ATP is hydrogenolyzed for each amidation. The protein is Cobyric acid synthase of Nitratidesulfovibrio vulgaris (strain ATCC 29579 / DSM 644 / CCUG 34227 / NCIMB 8303 / VKM B-1760 / Hildenborough) (Desulfovibrio vulgaris).